A 195-amino-acid polypeptide reads, in one-letter code: Calcium channel flower (195 aa).

A run of 3 helical transmembrane segments spans residues 34-54, 66-88, and 117-137; these read LLGIVAAFFAILFGLWNVISI, IIQMVAGFVVMLLEAPCCFVCIE, and IFMCFGLASLFGSGLIFATGV.

Belongs to the calcium channel flower family. In terms of assembly, homomultimer. Associates with the dally/ magu complex.

Its subcellular location is the cell membrane. It localises to the cytoplasmic vesicle. The protein localises to the secretory vesicle. The protein resides in the synaptic vesicle membrane. It is found in the presynaptic cell membrane. Its subcellular location is the endosome. Its activity is regulated as follows. Channel activity is inhibited by La(3+), which reduces Ca(2+) influx and thus inhibits it's function in promoting activity-dependent bulk endocytosis (ADBE) in response to high stimuli. In terms of biological role, transmembrane protein which mediates synaptic endocytosis, fitness-based cell culling, neuronal culling, morphogen gradient scaling, and calcium transport. Regulates synaptic endocytosis and hence couples exo- with endocytosis. Controls two major modes of synaptic vesicle (SV) endocytosis in the synaptic boutons of neuromuscular junctions (NMJs); Ca(2+) channel-independent Clathrin-mediated endocytosis (CME) in response to mild stimulation, and Ca(2+) channel-dependent activity-dependent bulk endocytosis (ADBE) in response to strong stimulation. Functions in ADBE and subsequent SV reformation from bulk endosomes by initiating Ca(2+) channel-dependent phosphatidylinositol 4,5-bisphosphate (PtdIns(4,5)P2) compartmentalization in synaptic boutons. There it acts at the periactive zone to provide the low Ca(2+) levels required to initiate Calcineurin activation and upregulate PtdIns(4,5)P2. Conversely PtdIns(4,5)P2 enhances fwe Ca(2+) channel-activity, establishing a positive feedback loop that induces PtdIns(4,5)P2 microdomain at the periactive zone. These microdomains trigger bulk membrane invagination (i.e. ADBE) by triggering actin polymerization while also promoting localization of fwe to bulk endosomes, thereby removing the ADBE trigger to reduce endocytosis and prevent excess membrane uptake. PtdIns(4,5)P2 then promotes SV reformation from the bulk endosomes, to coordinate ADBE and subsequent SV reformation. Different combinations of the flower isoforms at the cell membrane are also required for the identification and elimination of suboptimal or supernumerary cells during development, regeneration, and adulthood. Required for the recognition and elimination of unfit cells in the developing wing during cell competition. In the developing pupal retina, mediates the elimination of unwanted postmitotic neurons, including supernumerary photoreceptor neurons that form at the periphery of the retina and are contained within incomplete ommatidia units. Also required for efficient elimination and replacement of old neurons by newly generated neurons during regeneration in the adult brain following mechanical injury. Downstream of the flower fitness fingerprints, cells identified as unwanted or unfit are eliminated via apoptosis through the expression of ahuizotl (azot). However, the cells marked for elimination by the flower isoforms only undergo apoptosis if additional thresholds are met; (1) their neighboring fit/healthy cells express different levels of the fwe isoforms, and (2) the levels of the protective signal SPARC expressed by the loser or unwanted cells are unable to inhibit caspase activation. These additional thresholds for flower-mediated apoptosis, allows useful cells to recover from transient and limited stress before they are unnecessarily eliminated. Functions with dally and magu in a mechanism of scaling, which utilises apoptosis to ensure that the dpp morphogen gradient, which mediates organ growth, remains proportional to the size of the growing wing. In this mechanism, fwe represses dally- and Magu-dependent activity in expanding the gradient, and dally/Magu inhibits fwe-dependent apoptosis to keep cell death rate low. When the levels of these different proteins are optimally regulated the gradient correctly scales with organ growth but when this fails, fwe-mediated apoptosis is activated to trim the developing tissue to match the correct size of the gradient. In Drosophila ananassae (Fruit fly), this protein is Calcium channel flower.